Consider the following 523-residue polypeptide: Glutamate--cysteine ligase (523 aa).

It belongs to the glutamate--cysteine ligase type 1 family. Type 1 subfamily.

The enzyme catalyses L-cysteine + L-glutamate + ATP = gamma-L-glutamyl-L-cysteine + ADP + phosphate + H(+). It participates in sulfur metabolism; glutathione biosynthesis; glutathione from L-cysteine and L-glutamate: step 1/2. The polypeptide is Glutamate--cysteine ligase (Shewanella oneidensis (strain ATCC 700550 / JCM 31522 / CIP 106686 / LMG 19005 / NCIMB 14063 / MR-1)).